A 417-amino-acid polypeptide reads, in one-letter code: S-inosyl-L-homocysteine hydrolase (417 aa).

The substrate site is built by Asp124 and Glu149. Residue 150–152 participates in NAD(+) binding; that stretch reads TTT. Positions 179 and 183 each coordinate substrate. NAD(+)-binding positions include Asn184, 213 to 218, Glu236, Asn271, 292 to 294, and Asn339; these read GYGWCG and SGH.

Belongs to the adenosylhomocysteinase family. It depends on NAD(+) as a cofactor.

The protein resides in the cytoplasm. The enzyme catalyses S-inosyl-L-homocysteine + H2O = L-homocysteine + inosine. It participates in amino-acid biosynthesis; S-adenosyl-L-methionine biosynthesis. Its function is as follows. Catalyzes the hydrolysis of S-inosyl-L-homocysteine (SIH) to L-homocysteine (Hcy) and inosine. Likely functions in a S-adenosyl-L-methionine (SAM) recycling pathway from S-adenosyl-L-homocysteine (SAH) produced from SAM-dependent methylation reactions. Can also catalyze the reverse reaction in vitro, i.e. the synthesis of SIH from Hcy and inosine. The chain is S-inosyl-L-homocysteine hydrolase from Methanothermobacter thermautotrophicus (strain ATCC 29096 / DSM 1053 / JCM 10044 / NBRC 100330 / Delta H) (Methanobacterium thermoautotrophicum).